A 371-amino-acid chain; its full sequence is Peptide chain release factor 2 (371 aa).

N5-methylglutamine is present on Gln253.

Belongs to the prokaryotic/mitochondrial release factor family. Methylated by PrmC. Methylation increases the termination efficiency of RF2.

The protein resides in the cytoplasm. In terms of biological role, peptide chain release factor 2 directs the termination of translation in response to the peptide chain termination codons UGA and UAA. The polypeptide is Peptide chain release factor 2 (prfB) (Mycobacterium bovis (strain ATCC BAA-935 / AF2122/97)).